Consider the following 688-residue polypeptide: Elongation factor G (688 aa).

A tr-type G domain is found at 8–282 (EKFRNFGIMA…GVVDYLPSPL (275 aa)). Residues 17–24 (AHIDAGKT), 81–85 (DTPGH), and 135–138 (NKMD) each bind GTP.

It belongs to the TRAFAC class translation factor GTPase superfamily. Classic translation factor GTPase family. EF-G/EF-2 subfamily.

The protein localises to the cytoplasm. Functionally, catalyzes the GTP-dependent ribosomal translocation step during translation elongation. During this step, the ribosome changes from the pre-translocational (PRE) to the post-translocational (POST) state as the newly formed A-site-bound peptidyl-tRNA and P-site-bound deacylated tRNA move to the P and E sites, respectively. Catalyzes the coordinated movement of the two tRNA molecules, the mRNA and conformational changes in the ribosome. The polypeptide is Elongation factor G (Clostridium perfringens (strain 13 / Type A)).